The sequence spans 56 residues: Large ribosomal subunit protein uL30 (56 aa).

This sequence belongs to the universal ribosomal protein uL30 family. In terms of assembly, part of the 50S ribosomal subunit.

The sequence is that of Large ribosomal subunit protein uL30 from Nitratidesulfovibrio vulgaris (strain ATCC 29579 / DSM 644 / CCUG 34227 / NCIMB 8303 / VKM B-1760 / Hildenborough) (Desulfovibrio vulgaris).